The primary structure comprises 296 residues: Cytidine deaminase (296 aa).

2 consecutive CMP/dCMP-type deaminase domains span residues 47-167 and 186-296; these read TEAE…FGPK and DSAD…IDPV. 88–90 provides a ligand contact to substrate; sequence NLE. His101 provides a ligand contact to Zn(2+). Glu103 acts as the Proton donor in catalysis. Cys128 and Cys131 together coordinate Zn(2+).

It belongs to the cytidine and deoxycytidylate deaminase family. Homodimer. Zn(2+) is required as a cofactor.

It carries out the reaction cytidine + H2O + H(+) = uridine + NH4(+). It catalyses the reaction 2'-deoxycytidine + H2O + H(+) = 2'-deoxyuridine + NH4(+). In terms of biological role, this enzyme scavenges exogenous and endogenous cytidine and 2'-deoxycytidine for UMP synthesis. The polypeptide is Cytidine deaminase (Shewanella baltica (strain OS155 / ATCC BAA-1091)).